The sequence spans 99 residues: Plastocyanin B'/B'' (99 aa).

The Plastocyanin-like domain maps to 1 to 99 (IEVLLGSDDG…AGMVGKVTVN (99 aa)). Residues H37, C84, H87, and M92 each coordinate Cu cation.

The protein belongs to the plastocyanin family. It depends on Cu(2+) as a cofactor.

The protein resides in the plastid. Its subcellular location is the chloroplast thylakoid membrane. In terms of biological role, participates in electron transfer between P700 and the cytochrome b6-f complex in photosystem I. The sequence is that of Plastocyanin B'/B'' from Nicotiana tabacum (Common tobacco).